The following is a 75-amino-acid chain: Small ribosomal subunit protein bS18 (75 aa).

This sequence belongs to the bacterial ribosomal protein bS18 family. Part of the 30S ribosomal subunit. Forms a tight heterodimer with protein bS6.

Binds as a heterodimer with protein bS6 to the central domain of the 16S rRNA, where it helps stabilize the platform of the 30S subunit. This chain is Small ribosomal subunit protein bS18, found in Buchnera aphidicola subsp. Cinara cedri (strain Cc).